Reading from the N-terminus, the 116-residue chain is Iron-sulfur cluster insertion protein ErpA (116 aa).

Cys-44, Cys-108, and Cys-110 together coordinate iron-sulfur cluster.

This sequence belongs to the HesB/IscA family. In terms of assembly, homodimer. It depends on iron-sulfur cluster as a cofactor.

Required for insertion of 4Fe-4S clusters for at least IspG. The polypeptide is Iron-sulfur cluster insertion protein ErpA (Francisella tularensis subsp. mediasiatica (strain FSC147)).